We begin with the raw amino-acid sequence, 271 residues long: Elongation factor Ts (271 aa).

Positions 76–79 (TDFV) are involved in Mg(2+) ion dislocation from EF-Tu.

The protein belongs to the EF-Ts family.

It is found in the cytoplasm. Its function is as follows. Associates with the EF-Tu.GDP complex and induces the exchange of GDP to GTP. It remains bound to the aminoacyl-tRNA.EF-Tu.GTP complex up to the GTP hydrolysis stage on the ribosome. The protein is Elongation factor Ts of Mycolicibacterium vanbaalenii (strain DSM 7251 / JCM 13017 / BCRC 16820 / KCTC 9966 / NRRL B-24157 / PYR-1) (Mycobacterium vanbaalenii).